A 356-amino-acid chain; its full sequence is GTPase Obg (356 aa).

One can recognise an Obg domain in the interval 1–159 (MKFIDRVKIH…RWLRLELKLL (159 aa)). Residues 160 to 331 (ADVGLLGMPN…LVAEVARELE (172 aa)) enclose the OBG-type G domain. GTP is bound by residues 166–173 (GMPNAGKS), 191–195 (FTTLV), 213–216 (DIPG), 283–286 (SKID), and 312–314 (SAV). S173 and T193 together coordinate Mg(2+).

The protein belongs to the TRAFAC class OBG-HflX-like GTPase superfamily. OBG GTPase family. In terms of assembly, monomer. Requires Mg(2+) as cofactor.

It localises to the cytoplasm. Its function is as follows. An essential GTPase which binds GTP, GDP and possibly (p)ppGpp with moderate affinity, with high nucleotide exchange rates and a fairly low GTP hydrolysis rate. Plays a role in control of the cell cycle, stress response, ribosome biogenesis and in those bacteria that undergo differentiation, in morphogenesis control. This Syntrophotalea carbinolica (strain DSM 2380 / NBRC 103641 / GraBd1) (Pelobacter carbinolicus) protein is GTPase Obg.